The sequence spans 258 residues: uncharacterized protein (258 aa).

The N-terminal stretch at 1–19 (MRKIFLPLLLVALSPVAHS) is a signal peptide.

This is an uncharacterized protein from Escherichia coli (strain K12).